Consider the following 142-residue polypeptide: Large ribosomal subunit protein uL13 (142 aa).

The protein belongs to the universal ribosomal protein uL13 family. Part of the 50S ribosomal subunit.

Functionally, this protein is one of the early assembly proteins of the 50S ribosomal subunit, although it is not seen to bind rRNA by itself. It is important during the early stages of 50S assembly. The sequence is that of Large ribosomal subunit protein uL13 from Laribacter hongkongensis (strain HLHK9).